The sequence spans 255 residues: NAP1-related protein 2 (255 aa).

Positions 19–60 (IDAELVLSIEKLQEIQDDLEKINEKASDEVLEVEQKYNVIRK) form a coiled coil. The tract at residues 213-255 (NPLTYFNNDADEEDFDGDDDGDEEEKEGDSDEDDDEEDEVGEE) is disordered. Residues 221–255 (DADEEDFDGDDDGDEEEKEGDSDEDDDEEDEVGEE) show a composition bias toward acidic residues.

This sequence belongs to the nucleosome assembly protein (NAP) family. Can form homomeric and heteromeric protein complexes with NRP1. Binds histones H2A and H2B and associates with chromatin in vivo. In terms of tissue distribution, ubiquitous.

Its subcellular location is the cytoplasm. It is found in the nucleus. Acts as a histone H2A/H2B chaperone in nucleosome assembly, playing a critical role for the correct expression of genes involved in root proliferation and patterning. Required with NRP1 for the maintenance of cell proliferation and differentiation in postembryonic root growth. Involved in both intramolecular and intermolecular somatic homologous recombination. This Arabidopsis thaliana (Mouse-ear cress) protein is NAP1-related protein 2 (NRP2).